The sequence spans 67 residues: Cell division protein ZapB (67 aa).

Residues 3-59 (LELLSQLETKIQTALETIELLKLELDEEKEKAANLAEQNHQLKQELSSWNDKITGLV) adopt a coiled-coil conformation.

Belongs to the ZapB family. In terms of assembly, homodimer. The ends of the coiled-coil dimer bind to each other, forming polymers. Interacts with FtsZ.

The protein resides in the cytoplasm. Its function is as follows. Non-essential, abundant cell division factor that is required for proper Z-ring formation. It is recruited early to the divisome by direct interaction with FtsZ, stimulating Z-ring assembly and thereby promoting cell division earlier in the cell cycle. Its recruitment to the Z-ring requires functional FtsA or ZipA. This chain is Cell division protein ZapB, found in Shewanella amazonensis (strain ATCC BAA-1098 / SB2B).